The sequence spans 82 residues: Small ribosomal subunit protein eS21y (82 aa).

An N-acetylmethionine modification is found at M1.

The protein belongs to the eukaryotic ribosomal protein eS21 family.

The chain is Small ribosomal subunit protein eS21y (RPS21C) from Arabidopsis thaliana (Mouse-ear cress).